The following is a 234-amino-acid chain: Small ribosomal subunit protein uS3 (234 aa).

Residues 39-107 (IRKFLKKELY…EVSINIKEVK (69 aa)) enclose the KH type-2 domain.

Belongs to the universal ribosomal protein uS3 family. Part of the 30S ribosomal subunit. Forms a tight complex with proteins S10 and S14.

In terms of biological role, binds the lower part of the 30S subunit head. Binds mRNA in the 70S ribosome, positioning it for translation. In Helicobacter acinonychis (strain Sheeba), this protein is Small ribosomal subunit protein uS3.